The primary structure comprises 976 residues: MSTKVLDPAFQGAGQKPGTEIWRIENFEAVPVPKSEHGKFYMGDTYIVLQTTQNKGGAYLFDIHFWIGKDTSQDEAGTAAVKTVELDAVLGGRAVQHREIQGHESDKFLSYFKPCIIPLEGGVASGFKTVEEEVFETRLYTCKGKRAIRLKQVPFARSSLNHDDVFILDTEEKIYQFNGANSNIQERAKALEVVQYLKDKYHEGTCDVAIVDDGKLDTESDSGAFWVLFGGFAPIGRKVANDDDIVPESTPPKLYCITDGKMEPIDGDLSKSMLENTKCYLLDCGAEIYIWVGRVTQVDERKAASQSAEEFLASENRPKATHVTRVIQGYESHSFKSNFDSWPSGSATPGNEEGRGKVAALLKQQGVGLKGIAKSAPVNEDIPPLLESGGKLEVWYVNGKVKTPLPKEDIGKLYSGDCYLVLYTYHSGERKDEYFLSCWFGKKSIPEDQDTAIRLANTMSNSLKGRPVQGRIYEGKEPPQFVALFQPMVVLKGGLSSGYKSSMGESESTDETYTPESIALVQVSGTGVHNNKAVQVETVATSLNSYECFLLQSGTSMFLWHGNQSTHEQLELATKVAEFLKPGITLKHAKEGTESSTFWFALGGKQNFTSKKASSETIRDPHLFSFAFNRGKFQVEEIYNFAQDDLLTEDIYFLDTHAEVFVWVGQCVEPKEKQTVFEIGQKYIDLAGSLEGLHPKVPIYKINEGNEPCFFTTYFSWDATKAIVQGNSFQKKASLLFGTHHVVEDKSNGGNQGLRQRAEALAALNSAFNSSSNRPAYSSQDRLNESHDGPRQRAEALAALSSAFNSSSSSTKSPPPPRPVGTSQASQRAAAVAALSQVLVAENKKSPDTSPTRRSTSSNPADDIPLTEAKDEEEASEVAGLEAKEEEEVSPAADETEAKQETEEQGDSEIQPSGATFTYEQLRAKSENPVTGIDFKRREAYLSEEEFQSVFGIEKEAFNNLPRWKQDLLKKKFDLF.

Gelsolin-like repeat units follow at residues 27–77 (FEAV…DEAG), 148–188 (IRLK…QERA), 260–302 (GKME…DERK), 399–450 (GKVK…EDQD), 531–571 (NKAV…EQLE), and 633–674 (FQVE…KEKQ). Positions 769–917 (NSSSNRPAYS…SEIQPSGATF (149 aa)) are disordered. The span at 782 to 794 (RLNESHDGPRQRA) shows a compositional bias: basic and acidic residues. 3 stretches are compositionally biased toward low complexity: residues 795–812 (EALA…SSTK), 823–841 (SQAS…VLVA), and 848–858 (DTSPTRRSTSS). At S890 the chain carries Phosphoserine. Residues 908 to 917 (SEIQPSGATF) are compositionally biased toward polar residues. Residues 911-976 (QPSGATFTYE…DLLKKKFDLF (66 aa)) form the HP domain.

Belongs to the villin/gelsolin family. In terms of tissue distribution, expressed in all tissues examined. Mainly detected in the root epidermis and vasculature. Expressed in the root cap.

It is found in the cytoplasm. The protein resides in the cytoskeleton. Its function is as follows. Ca(2+)-regulated actin-binding protein. Involved in actin filaments bundling. Caps the barbed end of actin filaments and is able to sever them in a calcium-dependent manner. Required for the construction of actin collars in pollen tubes. Acts redundantly with VLN5 (AC Q9LVC6) to generate thick actin filament bundles and to regulate polarized pollen tube growth. Acts redundantly with VLN3 (AC O81645) to regulate directional organ growth and in sclerenchyma development. The sequence is that of Villin-2 from Arabidopsis thaliana (Mouse-ear cress).